The following is a 399-amino-acid chain: Enoyl-[acyl-carrier-protein] reductase [NADH] (399 aa).

NAD(+) contacts are provided by residues 48–53 (GASTGY), 74–75 (FE), 111–112 (DA), and 139–140 (LA). Residue tyrosine 225 participates in substrate binding. Tyrosine 235 (proton donor) is an active-site residue. Residues lysine 244 and 274–276 (VVT) each bind NAD(+).

This sequence belongs to the TER reductase family. As to quaternary structure, monomer.

The catalysed reaction is a 2,3-saturated acyl-[ACP] + NAD(+) = a (2E)-enoyl-[ACP] + NADH + H(+). The protein operates within lipid metabolism; fatty acid biosynthesis. Its function is as follows. Involved in the final reduction of the elongation cycle of fatty acid synthesis (FAS II). Catalyzes the reduction of a carbon-carbon double bond in an enoyl moiety that is covalently linked to an acyl carrier protein (ACP). In Yersinia pestis bv. Antiqua (strain Antiqua), this protein is Enoyl-[acyl-carrier-protein] reductase [NADH].